The following is a 310-amino-acid chain: Ribosomal RNA small subunit methyltransferase H (310 aa).

S-adenosyl-L-methionine-binding positions include Gly-47–His-49, Asp-66, Phe-93, Asp-108, and Gln-115. Residues Arg-275–Pro-310 are disordered. Basic and acidic residues predominate over residues Arg-301–Pro-310.

This sequence belongs to the methyltransferase superfamily. RsmH family.

It is found in the cytoplasm. It catalyses the reaction cytidine(1402) in 16S rRNA + S-adenosyl-L-methionine = N(4)-methylcytidine(1402) in 16S rRNA + S-adenosyl-L-homocysteine + H(+). Specifically methylates the N4 position of cytidine in position 1402 (C1402) of 16S rRNA. This Synechococcus sp. (strain CC9311) protein is Ribosomal RNA small subunit methyltransferase H.